The sequence spans 364 residues: Suberization-associated anionic peroxidase 1 (364 aa).

The N-terminal stretch at 1–25 (MGFRLSHLSLALSFVALALAGVAIY) is a signal peptide. N36 carries an N-linked (GlcNAc...) asparagine glycan. Cystine bridges form between C81-C160 and C112-C117. Catalysis depends on H110, which acts as the Proton acceptor. The Ca(2+) site is built by D111, V114, G116, and D118. N127, N162, and N200 each carry an N-linked (GlcNAc...) asparagine glycan. Disulfide bonds link C167/C353 and C246/C265. P209 provides a ligand contact to substrate. Residues N214 and N226 are each glycosylated (N-linked (GlcNAc...) asparagine). H239 lines the heme b pocket. T240 contacts Ca(2+). N264 carries N-linked (GlcNAc...) asparagine glycosylation. Ca(2+) contacts are provided by D278, T280, and D285.

This sequence belongs to the peroxidase family. Classical plant (class III) peroxidase subfamily. It depends on Ca(2+) as a cofactor. Heme b is required as a cofactor.

It localises to the secreted. The catalysed reaction is 2 a phenolic donor + H2O2 = 2 a phenolic radical donor + 2 H2O. Removal of H(2)O(2), oxidation of toxic reductants, biosynthesis and degradation of lignin, suberization, auxin catabolism, response to environmental stresses such as wounding, pathogen attack and oxidative stress. These functions might be dependent on each isozyme/isoform in each plant tissue. Its function is as follows. Suggested to catalyze the deposition of the aromatic residues of suberin on the cell wall and thus play a role in cell-suberization. This chain is Suberization-associated anionic peroxidase 1 (TAP1), found in Solanum lycopersicum (Tomato).